The chain runs to 37 residues: Palicourein (37 aa).

The segment at residues Gly1–Asn37 is a cross-link (cyclopeptide (Gly-Asn)). 3 disulfide bridges follow: Cys6–Cys24, Cys10–Cys26, and Cys16–Cys34.

It belongs to the cyclotide family. This is a cyclic peptide.

Functionally, probably participates in a plant defense mechanism. Inhibits the cytopathic effects of the human immunodeficiency virus. The polypeptide is Palicourein (Palicourea condensata (Cappel)).